Here is a 380-residue protein sequence, read N- to C-terminus: Flap endonuclease 1 (380 aa).

The N-domain stretch occupies residues 1–104 (MGIHGLAKLI…GELEKRGERR (104 aa)). Asp-34 provides a ligand contact to Mg(2+). DNA contacts are provided by Arg-47 and Arg-70. Residues Asp-86, Glu-158, Glu-160, Asp-179, and Asp-181 each coordinate Mg(2+). Residues 122–253 (NIDKFSKRLV…KRAMDLIRQH (132 aa)) form an I-domain region. Position 158 (Glu-158) interacts with DNA. Positions 231 and 233 each coordinate DNA. Mg(2+) is bound at residue Asp-233. The interaction with PCNA stretch occupies residues 336-344 (TQGRLDSFF). A disordered region spans residues 348-380 (GSLSSKRKEPEMKGSTKKKLKTGATAGKFKKGK).

The protein belongs to the XPG/RAD2 endonuclease family. FEN1 subfamily. In terms of assembly, interacts with PCNA. Three molecules of fen1 bind to one PCNA trimer with each molecule binding to one PCNA monomer. PCNA stimulates the nuclease activity without altering cleavage specificity. Mg(2+) is required as a cofactor. Post-translationally, phosphorylated. Phosphorylation upon DNA damage induces relocalization to the nuclear plasma.

The protein resides in the nucleus. The protein localises to the nucleolus. Its subcellular location is the nucleoplasm. It localises to the mitochondrion. In terms of biological role, structure-specific nuclease with 5'-flap endonuclease and 5'-3' exonuclease activities involved in DNA replication and repair. During DNA replication, cleaves the 5'-overhanging flap structure that is generated by displacement synthesis when DNA polymerase encounters the 5'-end of a downstream Okazaki fragment. It enters the flap from the 5'-end and then tracks to cleave the flap base, leaving a nick for ligation. Also involved in the long patch base excision repair (LP-BER) pathway, by cleaving within the apurinic/apyrimidinic (AP) site-terminated flap. Acts as a genome stabilization factor that prevents flaps from equilibrating into structures that lead to duplications and deletions. Also possesses 5'-3' exonuclease activity on nicked or gapped double-stranded DNA, and exhibits RNase H activity. Also involved in replication and repair of rDNA and in repairing mitochondrial DNA. In Osmerus mordax (Rainbow smelt), this protein is Flap endonuclease 1 (fen1).